The following is a 111-amino-acid chain: Prostate and testis expressed protein 2 (111 aa).

The signal sequence occupies residues 1 to 18 (MFVLVMICLFCQYWGVLN). In terms of domain architecture, UPAR/Ly6 spans 27 to 108 (LLCYKCKKYH…CKHSNYCNLP (82 aa)). 4 disulfide bridges follow: Cys29-Cys55, Cys32-Cys40, Cys47-Cys78, and Cys82-Cys99.

This sequence belongs to the PATE family. As to expression, expressed in prostate, testis, brain and lung.

It is found in the secreted. The sequence is that of Prostate and testis expressed protein 2 (Pate2) from Mus musculus (Mouse).